A 290-amino-acid polypeptide reads, in one-letter code: Bifunctional protein FolD (290 aa).

NADP(+)-binding positions include 166–168 (GAS) and Ile232.

It belongs to the tetrahydrofolate dehydrogenase/cyclohydrolase family. Homodimer.

It catalyses the reaction (6R)-5,10-methylene-5,6,7,8-tetrahydrofolate + NADP(+) = (6R)-5,10-methenyltetrahydrofolate + NADPH. The enzyme catalyses (6R)-5,10-methenyltetrahydrofolate + H2O = (6R)-10-formyltetrahydrofolate + H(+). It participates in one-carbon metabolism; tetrahydrofolate interconversion. In terms of biological role, catalyzes the oxidation of 5,10-methylenetetrahydrofolate to 5,10-methenyltetrahydrofolate and then the hydrolysis of 5,10-methenyltetrahydrofolate to 10-formyltetrahydrofolate. This chain is Bifunctional protein FolD, found in Proteus mirabilis (strain HI4320).